We begin with the raw amino-acid sequence, 160 residues long: Transcription elongation factor GreA (160 aa).

Residues 1-72 (MAEKTYPMTL…QISSLETKIR (72 aa)) adopt a coiled-coil conformation.

It belongs to the GreA/GreB family.

Functionally, necessary for efficient RNA polymerase transcription elongation past template-encoded arresting sites. The arresting sites in DNA have the property of trapping a certain fraction of elongating RNA polymerases that pass through, resulting in locked ternary complexes. Cleavage of the nascent transcript by cleavage factors such as GreA or GreB allows the resumption of elongation from the new 3'terminus. GreA releases sequences of 2 to 3 nucleotides. This chain is Transcription elongation factor GreA, found in Streptococcus gordonii (strain Challis / ATCC 35105 / BCRC 15272 / CH1 / DL1 / V288).